Reading from the N-terminus, the 1377-residue chain is Hemoglobin-binding protease hbp autotransporter (1377 aa).

The signal sequence occupies residues 1-52 (MNRIYSLRYSAVARGFIAVSEFARKCVHKSVRRLCFPVLLLIPVLFSAGSLA). The 250-residue stretch at 53 to 302 (GTVNNELGYQ…AVIPLDFIGQ (250 aa)) folds into the Peptidase S6 domain. Catalysis depends on charge relay system residues His-125, Asp-153, and Ser-259. One can recognise an Autotransporter domain in the interval 1111-1377 (DINGEAGTWV…AINANIRYSF (267 aa)).

In terms of processing, cleaved to release the mature protein from the outer membrane.

The protein resides in the periplasm. Its subcellular location is the secreted. It localises to the cell surface. It is found in the cell outer membrane. Protease activity is inhibited by 3,4-dichloroisocoumarin. Functionally, interacts with hemoglobin, degrades it and subsequently binds the released heme. Could make heme accessible not only for E.coli, but also for B.fragilis during mixed intra-abdominal infections. Has a role in abscess formation. The polypeptide is Hemoglobin-binding protease hbp autotransporter (hbp) (Escherichia coli).